Consider the following 208-residue polypeptide: Small ribosomal subunit protein uS4 (208 aa).

In terms of domain architecture, S4 RNA-binding spans 98 to 158 (RRLDNVVYRL…EKSRKIACIN (61 aa)).

It belongs to the universal ribosomal protein uS4 family. In terms of assembly, part of the 30S ribosomal subunit. Contacts protein S5. The interaction surface between S4 and S5 is involved in control of translational fidelity.

One of the primary rRNA binding proteins, it binds directly to 16S rRNA where it nucleates assembly of the body of the 30S subunit. Its function is as follows. With S5 and S12 plays an important role in translational accuracy. This Geobacter metallireducens (strain ATCC 53774 / DSM 7210 / GS-15) protein is Small ribosomal subunit protein uS4.